Here is a 792-residue protein sequence, read N- to C-terminus: Protein SEY1 homolog 2 (792 aa).

Topologically, residues 1–638 are cytoplasmic; the sequence is MEQIITGDGA…NIKAQANREQ (638 aa). A GB1/RHD3-type G domain is found at 28 to 245; the sequence is GVDYHTVAII…LKDYLFAEKS (218 aa). 38–45 lines the GTP pocket; that stretch reads GPQSSGKS. A helical transmembrane segment spans residues 639–659; that stretch reads IPGWAWLATFLCSSNYIMKLL. The Lumenal portion of the chain corresponds to 660–662; sequence ANP. A helical membrane pass occupies residues 663-683; sequence IFFALAVIIGGIYSILRMLGL. At 684–792 the chain is on the cytoplasmic side; that stretch reads QDVAKKTLLD…LTRTQSLEFM (109 aa). A coiled-coil region spans residues 691-718; the sequence is LLDKFNSLLKNLTKDENEQEKEGEENEE. Residues 703-792 are disordered; it reads TKDENEQEKE…LTRTQSLEFM (90 aa). Residues 707–723 are compositionally biased toward acidic residues; the sequence is NEQEKEGEENEEPEEDQ. Composition is skewed to polar residues over residues 739 to 751 and 764 to 774; these read SVSQ…SIYK and IPQTSPLGNND.

Belongs to the TRAFAC class dynamin-like GTPase superfamily. GB1/RHD3 GTPase family. RHD3 subfamily.

The protein resides in the endoplasmic reticulum membrane. In terms of biological role, probable GTP-binding protein that may be involved in cell development. This chain is Protein SEY1 homolog 2, found in Trichomonas vaginalis (strain ATCC PRA-98 / G3).